Here is a 421-residue protein sequence, read N- to C-terminus: 2-deoxystreptamine N-acetyl-D-glucosaminyltransferase (421 aa).

This sequence belongs to the glycosyltransferase group 1 family. Glycosyltransferase 4 subfamily.

The catalysed reaction is 2-deoxystreptamine + UDP-N-acetyl-alpha-D-glucosamine = 2'-N-acetylparomamine + UDP + H(+). Its pathway is antibiotic biosynthesis; neomycin biosynthesis. Glycosyltransferase involved in the biosynthesis of neomycin by mediating conversion of 2-deoxystreptamine (2-DOS) to 2'-N-acetylparomamine using UDP-alpha-D-glucosamine as sugar donor. This Streptomyces fradiae (Streptomyces roseoflavus) protein is 2-deoxystreptamine N-acetyl-D-glucosaminyltransferase (neoD).